Here is an 885-residue protein sequence, read N- to C-terminus: MIVNASSESPRVQPQLYRTASISTIVQAEQQDRFLQLGELNDLVTFLNSGTKRLEIAEVLSKNADILVAKAADKIFVGGSAISYLERPQASFVEFDNISMTQKEMSGNVQVNLLSNTSSNVISNDTLPPGFKPINVVRYGSTRMKKSLRDLDWFLRYLTYAIIAGDPNILSVNIRGLKDLISNACSSAAATVALREMRKSAISIFDNDLSAQEIVQQYFNILITEFDSPSLTDKIRRRTSTDVQGLRLPQIYSKSGIPLQRFVMKTSLSNEEKSSVLKACYRQVFERDIAKAYNLSFVDLESQVKNGSLSIKEFIRRIGKSSVYRKQFYEPFVNSRVVELAFKHFLGRGLSSLEEFQKYFSILSLRGLNGLIDALINSLEYADYFAEETCPYLRGLSEEPLESRNWGVQFSLLNYSAPFRKVPQFITLFSDYKMSLPDQHPYGLGNDHLALQFGAIFPNSLTALSNKSAFFGRYTRRILLRQGPGIYSQISNPQARSKSIGSLGPKIFKLNSIDNTYFSDEVMSLPPDIEQIIKAIYLRVFGRFIYLEELSSVRKFESLFRSSKISVRDFIRNLVKSSVFRSLYWEPLYICKAIEYIHYRLLGRPSYGRQEINQYFDIVYREGYYKMIDYLLNSSEYIRSFGDNTVPYERYITSANMILKSNYSNFLYSTLKTKNSNSKKFIELSNILEKRSLNSIQARISQGVSTVRDQYKVFQLTQLSSQVDKRQVVKAIYRQIFERDLNSFAIGDEFINLEKALVNNNITVQQFIEQIGSSSLYGREFYQPYPNTKVIELGTKHFLGRAPNNQAEIRYYNQILASQGLSSFITVLVNSNEYNQVFGVNIVPYRRFTTLPAANFPNTEKLYNTLTKQSSEIIVPSFIVVPGNQ.

Cys-185 contacts (2R,3E)-phycocyanobilin. 3 consecutive PBS-linker domains span residues 242 to 422 (DVQG…FRKV), 498 to 680 (KSIG…NSKK), and 694 to 871 (NSIQ…KQSS).

This sequence belongs to the phycobilisome linker protein family. Post-translationally, contains one covalently linked bilin chromophore. This protein autochromophorylates (Potential).

The protein resides in the plastid. Its subcellular location is the chloroplast thylakoid membrane. Functionally, this protein is postulated to act both as terminal energy acceptor and as a linker polypeptide that stabilizes the phycobilisome architecture. May have intrinsic bilin lyase activity. This chain is Phycobiliprotein ApcE (apcE), found in Aglaothamnion neglectum (Red alga).